Reading from the N-terminus, the 311-residue chain is Lipoyl synthase (311 aa).

Positions 47, 52, 58, 73, 77, 80, and 286 each coordinate [4Fe-4S] cluster. One can recognise a Radical SAM core domain in the interval 59-276 (WSRHTATYLA…RSVGESLGLF (218 aa)).

Belongs to the radical SAM superfamily. Lipoyl synthase family. [4Fe-4S] cluster serves as cofactor.

Its subcellular location is the cytoplasm. The catalysed reaction is [[Fe-S] cluster scaffold protein carrying a second [4Fe-4S](2+) cluster] + N(6)-octanoyl-L-lysyl-[protein] + 2 oxidized [2Fe-2S]-[ferredoxin] + 2 S-adenosyl-L-methionine + 4 H(+) = [[Fe-S] cluster scaffold protein] + N(6)-[(R)-dihydrolipoyl]-L-lysyl-[protein] + 4 Fe(3+) + 2 hydrogen sulfide + 2 5'-deoxyadenosine + 2 L-methionine + 2 reduced [2Fe-2S]-[ferredoxin]. The protein operates within protein modification; protein lipoylation via endogenous pathway; protein N(6)-(lipoyl)lysine from octanoyl-[acyl-carrier-protein]: step 2/2. In terms of biological role, catalyzes the radical-mediated insertion of two sulfur atoms into the C-6 and C-8 positions of the octanoyl moiety bound to the lipoyl domains of lipoate-dependent enzymes, thereby converting the octanoylated domains into lipoylated derivatives. The polypeptide is Lipoyl synthase (Chlamydia trachomatis serovar L2 (strain ATCC VR-902B / DSM 19102 / 434/Bu)).